Consider the following 421-residue polypeptide: Phosphoribosylamine--glycine ligase (421 aa).

The ATP-grasp domain occupies 108–314 (KEIMVKYNVP…FAQNIDDIMM (207 aa)). ATP is bound at residue 134-195 (IEEQGAPIVV…EEFLDGEEFS (62 aa)). 2 residues coordinate Mg(2+): Glu284 and Asn286.

The protein belongs to the GARS family. The cofactor is Mg(2+). Requires Mn(2+) as cofactor.

It catalyses the reaction 5-phospho-beta-D-ribosylamine + glycine + ATP = N(1)-(5-phospho-beta-D-ribosyl)glycinamide + ADP + phosphate + H(+). Its pathway is purine metabolism; IMP biosynthesis via de novo pathway; N(1)-(5-phospho-D-ribosyl)glycinamide from 5-phospho-alpha-D-ribose 1-diphosphate: step 2/2. This Streptococcus pyogenes serotype M6 (strain ATCC BAA-946 / MGAS10394) protein is Phosphoribosylamine--glycine ligase.